Here is a 382-residue protein sequence, read N- to C-terminus: Queuine tRNA-ribosyltransferase (382 aa).

Asp-93 functions as the Proton acceptor in the catalytic mechanism. Substrate is bound by residues 93-97, Asp-147, Gln-191, and Gly-218; that span reads DSGGF. The tract at residues 249-255 is RNA binding; the sequence is GVGKPED. Asp-268 acts as the Nucleophile in catalysis. The tract at residues 273–277 is RNA binding; important for wobble base 34 recognition; it reads TRNAR. Cys-306, Cys-308, Cys-311, and His-337 together coordinate Zn(2+).

The protein belongs to the queuine tRNA-ribosyltransferase family. As to quaternary structure, homodimer. Within each dimer, one monomer is responsible for RNA recognition and catalysis, while the other monomer binds to the replacement base PreQ1. It depends on Zn(2+) as a cofactor.

It carries out the reaction 7-aminomethyl-7-carbaguanine + guanosine(34) in tRNA = 7-aminomethyl-7-carbaguanosine(34) in tRNA + guanine. Its pathway is tRNA modification; tRNA-queuosine biosynthesis. Catalyzes the base-exchange of a guanine (G) residue with the queuine precursor 7-aminomethyl-7-deazaguanine (PreQ1) at position 34 (anticodon wobble position) in tRNAs with GU(N) anticodons (tRNA-Asp, -Asn, -His and -Tyr). Catalysis occurs through a double-displacement mechanism. The nucleophile active site attacks the C1' of nucleotide 34 to detach the guanine base from the RNA, forming a covalent enzyme-RNA intermediate. The proton acceptor active site deprotonates the incoming PreQ1, allowing a nucleophilic attack on the C1' of the ribose to form the product. After dissociation, two additional enzymatic reactions on the tRNA convert PreQ1 to queuine (Q), resulting in the hypermodified nucleoside queuosine (7-(((4,5-cis-dihydroxy-2-cyclopenten-1-yl)amino)methyl)-7-deazaguanosine). The polypeptide is Queuine tRNA-ribosyltransferase (Haemophilus influenzae (strain 86-028NP)).